A 277-amino-acid chain; its full sequence is Putative phosphoenolpyruvate synthase regulatory protein (277 aa).

157 to 164 contacts ADP; it reads GVSRCGKT.

It belongs to the pyruvate, phosphate/water dikinase regulatory protein family. PSRP subfamily.

It carries out the reaction [pyruvate, water dikinase] + ADP = [pyruvate, water dikinase]-phosphate + AMP + H(+). The catalysed reaction is [pyruvate, water dikinase]-phosphate + phosphate + H(+) = [pyruvate, water dikinase] + diphosphate. Bifunctional serine/threonine kinase and phosphorylase involved in the regulation of the phosphoenolpyruvate synthase (PEPS) by catalyzing its phosphorylation/dephosphorylation. In Klebsiella pneumoniae (strain 342), this protein is Putative phosphoenolpyruvate synthase regulatory protein.